The chain runs to 291 residues: Nucleotide-binding protein lhv_0732 (291 aa).

13 to 20 (GMSGAGKT) contacts ATP. 61 to 64 (DLRV) lines the GTP pocket.

This sequence belongs to the RapZ-like family.

Displays ATPase and GTPase activities. This chain is Nucleotide-binding protein lhv_0732, found in Lactobacillus helveticus (strain DPC 4571).